A 309-amino-acid polypeptide reads, in one-letter code: Malate dehydrogenase (309 aa).

NAD(+) contacts are provided by residues 7-12 (GAGHVG) and Asp-32. 2 residues coordinate substrate: Arg-81 and Arg-87. NAD(+)-binding positions include Asn-94 and 117–119 (VSN). Residues Asn-119 and Arg-150 each coordinate substrate. The active-site Proton acceptor is His-174.

The protein belongs to the LDH/MDH superfamily. MDH type 3 family.

It catalyses the reaction (S)-malate + NAD(+) = oxaloacetate + NADH + H(+). In terms of biological role, catalyzes the reversible oxidation of malate to oxaloacetate. The sequence is that of Malate dehydrogenase from Chlorobium phaeovibrioides (strain DSM 265 / 1930) (Prosthecochloris vibrioformis (strain DSM 265)).